The following is a 428-amino-acid chain: D-amino acid dehydrogenase (428 aa).

An FAD-binding site is contributed by 3-17 (VVILGSGVVGVASAY).

The protein belongs to the DadA oxidoreductase family. FAD is required as a cofactor.

It carries out the reaction a D-alpha-amino acid + A + H2O = a 2-oxocarboxylate + AH2 + NH4(+). Its pathway is amino-acid degradation; D-alanine degradation; NH(3) and pyruvate from D-alanine: step 1/1. Its function is as follows. Oxidative deamination of D-amino acids. This is D-amino acid dehydrogenase from Burkholderia lata (strain ATCC 17760 / DSM 23089 / LMG 22485 / NCIMB 9086 / R18194 / 383).